The chain runs to 60 residues: Large ribosomal subunit protein uL30 (60 aa).

It belongs to the universal ribosomal protein uL30 family. In terms of assembly, part of the 50S ribosomal subunit.

The sequence is that of Large ribosomal subunit protein uL30 from Shewanella loihica (strain ATCC BAA-1088 / PV-4).